An 80-amino-acid chain; its full sequence is Biotin synthase auxiliary protein (80 aa).

It belongs to the BsaP family. The cofactor is iron-sulfur cluster.

Functionally, required for the activity of the biotin synthase BioB. The protein is Biotin synthase auxiliary protein of Mycobacterium leprae (strain TN).